Reading from the N-terminus, the 223-residue chain is Ribose-5-phosphate isomerase A (223 aa).

Substrate contacts are provided by residues 26–29 (TGST), 82–85 (DGAD), and 95–98 (KGGG). Glutamate 104 (proton acceptor) is an active-site residue. Lysine 122 is a binding site for substrate.

Belongs to the ribose 5-phosphate isomerase family. In terms of assembly, homodimer.

It carries out the reaction aldehydo-D-ribose 5-phosphate = D-ribulose 5-phosphate. Its pathway is carbohydrate degradation; pentose phosphate pathway; D-ribose 5-phosphate from D-ribulose 5-phosphate (non-oxidative stage): step 1/1. Its function is as follows. Catalyzes the reversible conversion of ribose-5-phosphate to ribulose 5-phosphate. The sequence is that of Ribose-5-phosphate isomerase A from Streptococcus agalactiae serotype V (strain ATCC BAA-611 / 2603 V/R).